Here is a 626-residue protein sequence, read N- to C-terminus: Chaperone protein DnaK (626 aa).

Thr-197 is modified (phosphothreonine; by autocatalysis). Low complexity predominate over residues Gln-595 to Lys-614. A disordered region spans residues Gln-595–Glu-626.

The protein belongs to the heat shock protein 70 family.

Acts as a chaperone. This Nautilia profundicola (strain ATCC BAA-1463 / DSM 18972 / AmH) protein is Chaperone protein DnaK.